The following is a 263-amino-acid chain: Hydroxyethylthiazole kinase (263 aa).

Methionine 41 lines the substrate pocket. Residues arginine 117 and threonine 163 each coordinate ATP. Glycine 190 is a substrate binding site.

The protein belongs to the Thz kinase family. Requires Mg(2+) as cofactor.

The catalysed reaction is 5-(2-hydroxyethyl)-4-methylthiazole + ATP = 4-methyl-5-(2-phosphooxyethyl)-thiazole + ADP + H(+). The protein operates within cofactor biosynthesis; thiamine diphosphate biosynthesis; 4-methyl-5-(2-phosphoethyl)-thiazole from 5-(2-hydroxyethyl)-4-methylthiazole: step 1/1. Functionally, catalyzes the phosphorylation of the hydroxyl group of 4-methyl-5-beta-hydroxyethylthiazole (THZ). This chain is Hydroxyethylthiazole kinase, found in Exiguobacterium sp. (strain ATCC BAA-1283 / AT1b).